A 93-amino-acid chain; its full sequence is uncharacterized protein (93 aa).

This is an uncharacterized protein from Schizosaccharomyces pombe (strain 972 / ATCC 24843) (Fission yeast).